The sequence spans 72 residues: Translation initiation factor IF-1 (72 aa).

The 72-residue stretch at 1-72 (MAKEDVIEMQ…SKGRIVFRAR (72 aa)) folds into the S1-like domain.

This sequence belongs to the IF-1 family. Component of the 30S ribosomal translation pre-initiation complex which assembles on the 30S ribosome in the order IF-2 and IF-3, IF-1 and N-formylmethionyl-tRNA(fMet); mRNA recruitment can occur at any time during PIC assembly.

It is found in the cytoplasm. Its function is as follows. One of the essential components for the initiation of protein synthesis. Stabilizes the binding of IF-2 and IF-3 on the 30S subunit to which N-formylmethionyl-tRNA(fMet) subsequently binds. Helps modulate mRNA selection, yielding the 30S pre-initiation complex (PIC). Upon addition of the 50S ribosomal subunit IF-1, IF-2 and IF-3 are released leaving the mature 70S translation initiation complex. The sequence is that of Translation initiation factor IF-1 from Photobacterium profundum (strain SS9).